The primary structure comprises 186 residues: Large ribosomal subunit protein bL17 (186 aa).

The interval 123–186 (SEADRARRVK…ADEAEGSSED (64 aa)) is disordered. The segment covering 139-177 (EAAAAAPQAAVEPEAVEAAPAPDAPEAAPEAEAAAPQPA) has biased composition (low complexity).

It belongs to the bacterial ribosomal protein bL17 family. Part of the 50S ribosomal subunit. Contacts protein L32.

This chain is Large ribosomal subunit protein bL17, found in Mycobacterium avium (strain 104).